Consider the following 205-residue polypeptide: Urease accessory protein UreG (205 aa).

11-18 is a binding site for GTP; it reads GPVGSGKT.

The protein belongs to the SIMIBI class G3E GTPase family. UreG subfamily. Homodimer. UreD, UreF and UreG form a complex that acts as a GTP-hydrolysis-dependent molecular chaperone, activating the urease apoprotein by helping to assemble the nickel containing metallocenter of UreC. The UreE protein probably delivers the nickel.

It localises to the cytoplasm. Its function is as follows. Facilitates the functional incorporation of the urease nickel metallocenter. This process requires GTP hydrolysis, probably effectuated by UreG. The protein is Urease accessory protein UreG of Prochlorococcus marinus (strain NATL1A).